Consider the following 214-residue polypeptide: Nascent polypeptide-associated complex subunit alpha (214 aa).

Residues 1-80 are disordered; the sequence is MPGEATETVP…SEKKARKAMS (80 aa). The span at 29-40 shows a compositional bias: acidic residues; it reads SDSDDSPPELEQ. The span at 41-56 shows a compositional bias: low complexity; sequence DSTQTTTQQAQLAAAA. In terms of domain architecture, NAC-A/B spans 69–134; the sequence is SRSEKKARKA…AKIEDLSQQA (66 aa). Residues 175–212 form the UBA domain; it reads VEVKDIELVMSQANVSRAKAVRALKNNSNDIVNAIMEL.

This sequence belongs to the NAC-alpha family.

Its function is as follows. May promote appropriate targeting of ribosome-nascent polypeptide complexes. This chain is Nascent polypeptide-associated complex subunit alpha (naca), found in Xenopus tropicalis (Western clawed frog).